The sequence spans 145 residues: Probable flagellum biosynthesis repressor protein FlbT (145 aa).

Belongs to the FlbT family.

Has a post-transcriptional repressor function in flagellum biogenesis. Associates with the 5'-UTR of fljK mRNA and promotes its degradation. The polypeptide is Probable flagellum biosynthesis repressor protein FlbT (Chelativorans sp. (strain BNC1)).